The following is a 327-amino-acid chain: uncharacterized protein (327 aa).

A helical membrane pass occupies residues L12 to G32. A disordered region spans residues A149–G170. The segment covering E157 to D167 has biased composition (acidic residues). Residues E162–E227 adopt a coiled-coil conformation.

The protein resides in the membrane. This is an uncharacterized protein from Encephalitozoon cuniculi (strain GB-M1) (Microsporidian parasite).